The primary structure comprises 333 residues: Fructose-1,6-bisphosphatase class 1 (333 aa).

Mg(2+)-binding residues include glutamate 92, aspartate 113, leucine 115, and aspartate 116. Residues 116–119, asparagine 209, tyrosine 242, and lysine 272 each bind substrate; that span reads DGSS. Glutamate 278 is a binding site for Mg(2+).

The protein belongs to the FBPase class 1 family. As to quaternary structure, homotetramer. Mg(2+) serves as cofactor.

It localises to the cytoplasm. The catalysed reaction is beta-D-fructose 1,6-bisphosphate + H2O = beta-D-fructose 6-phosphate + phosphate. The protein operates within carbohydrate biosynthesis; Calvin cycle. The chain is Fructose-1,6-bisphosphatase class 1 from Chlorobium phaeobacteroides (strain BS1).